The primary structure comprises 340 residues: Zinc finger protein 488 (340 aa).

Residues 72–187 (AELALLVAPG…SVFPAGESAD (116 aa)) are important for transcriptional repression activity. Positions 77–180 (LVAPGKPRPG…AERPELTSVF (104 aa)) are disordered. Pro residues predominate over residues 82 to 91 (KPRPGKPLPP). The span at 106 to 125 (PRMKDRQVDAQAQEREHDDP) shows a compositional bias: basic and acidic residues. 2 consecutive C2H2-type zinc fingers follow at residues 275–302 (NWCA…KKEH) and 317–339 (LACP…MTSH). Positions 298-305 (HKKEHAGP) match the Nuclear localization signal motif.

Belongs to the krueppel C2H2-type zinc-finger protein family. In terms of assembly, interacts with OLIG2.

Its subcellular location is the nucleus. Transcriptional repressor. Plays a role in oligodendrocyte differentiation, together with OLIG2. Mediates Notch signaling-activated formation of oligodendrocyte precursors. Promotes differentiation of adult neural stem progenitor cells (NSPCs) into mature oligodendrocytes and contributes to remyelination following nerve injury. The protein is Zinc finger protein 488 (ZNF488) of Homo sapiens (Human).